A 244-amino-acid polypeptide reads, in one-letter code: Complement C1q subcomponent subunit A (244 aa).

The first 22 residues, 1–22 (MEAPRGWLVISVLAISLASSVT), serve as a signal peptide directing secretion. A disordered region spans residues 28–94 (APDGTHGSAG…PGPSGPMGPA (67 aa)). One can recognise a Collagen-like domain in the interval 31–109 (GTHGSAGIPG…KGTKGSPGNI (79 aa)). 2 positions are modified to 4-hydroxyproline: Pro-39 and Pro-45. Lys-48 carries the 5-hydroxylysine modification. An O-linked (Gal...) hydroxylysine glycan is attached at Lys-48. Pro-54 and Pro-57 each carry 4-hydroxyproline. Position 67 is a 5-hydroxylysine (Lys-67). The O-linked (Gal...) hydroxylysine glycan is linked to Lys-67. 3 positions are modified to 4-hydroxyproline: Pro-73, Pro-79, and Pro-85. A compositionally biased stretch (low complexity) spans 79-94 (PGRMGYPGPSGPMGPA). Lys-100 is modified (5-hydroxylysine). A glycan (O-linked (Gal...) hydroxylysine) is linked at Lys-100. One can recognise a C1q domain in the interval 110 to 244 (KDQPRPAFSA…FSGFLIFPSA (135 aa)). Asn-146 carries an N-linked (GlcNAc...) asparagine glycan. Cysteines 172 and 189 form a disulfide. Gln-198 contributes to the Ca(2+) binding site.

Core component of the complement C1 complex, a calcium-dependent complex composed of 1 molecule of the C1Q subcomplex, 2 molecules of C1R and 2 molecules of C1S. The C1Q subcomplex is composed 18 subunits: 3 chains of C1QA, C1QB, and C1QC trimerize to form 6 collagen-like triple helices connected to six globular ligand-recognition modules (C1q domain). Interacts with CR1 (via Sushi 24 and Sushi 25 domains). Interacts (via C-terminus) with CD33; this interaction activates CD33 inhibitory motifs. Post-translationally, O-linked glycans are assumed to be the Glc-Gal disaccharides typically found as secondary modifications of hydroxylated lysines in collagen-like domains.

The protein resides in the secreted. It localises to the cell surface. The C1Q subcomplex is inhibited by sulfated molecules, such as triterpenoid sulfates, heparan sulfate, or chondroitin sulfates. In terms of biological role, core component of the complement C1 complex, a multiprotein complex that initiates the classical pathway of the complement system, a cascade of proteins that leads to phagocytosis and breakdown of pathogens and signaling that strengthens the adaptive immune system. The classical complement pathway is initiated by the C1Q subcomplex of the C1 complex, which specifically binds IgG or IgM immunoglobulins complexed with antigens, forming antigen-antibody complexes on the surface of pathogens: C1QA, together with C1QB and C1QC, specifically recognizes and binds the Fc regions of IgG or IgM via its C1q domain. Immunoglobulin-binding activates the proenzyme C1R, which cleaves C1S, initiating the proteolytic cascade of the complement system. The C1Q subcomplex is activated by a hexamer of IgG complexed with antigens, while it is activated by a pentameric IgM. The C1Q subcomplex also recognizes and binds phosphatidylserine exposed on the surface of cells undergoing programmed cell death, possibly promoting activation of the complement system. This is Complement C1q subcomponent subunit A (C1QA) from Bos taurus (Bovine).